A 137-amino-acid polypeptide reads, in one-letter code: Basic phospholipase A2 homolog W6D49 (137 aa).

Positions 1–16 (MRTLWILAVLLVSVDG) are cleaved as a signal peptide. 7 disulfide bridges follow: cysteine 42–cysteine 131, cysteine 44–cysteine 60, cysteine 59–cysteine 111, cysteine 65–cysteine 137, cysteine 66–cysteine 104, cysteine 73–cysteine 97, and cysteine 91–cysteine 102. Positions 121 to 133 (KKQQFNTGIFCSK) are important for membrane-damaging activities in eukaryotes and bacteria; heparin-binding.

As to quaternary structure, monomer. In terms of tissue distribution, expressed by the venom gland.

It is found in the secreted. Heparin reduces its edema-inducing activity. Snake venom phospholipase A2 homolog that lacks enzymatic activity. Shows myotoxin activities and displays edema-inducing activities. A model of myotoxic mechanism has been proposed: an apo Lys49-PLA2 is activated by the entrance of a hydrophobic molecule (e.g. fatty acid) at the hydrophobic channel of the protein leading to a reorientation of a monomer. This reorientation causes a transition between 'inactive' to 'active' states, causing alignment of C-terminal and membrane-docking sites (MDoS) side-by-side and putting the membrane-disruption sites (MDiS) in the same plane, exposed to solvent and in a symmetric position for both monomers. The MDoS region stabilizes the toxin on membrane by the interaction of charged residues with phospholipid head groups. Subsequently, the MDiS region destabilizes the membrane with penetration of hydrophobic residues. This insertion causes a disorganization of the membrane, allowing an uncontrolled influx of ions (i.e. calcium and sodium), and eventually triggering irreversible intracellular alterations and cell death. The polypeptide is Basic phospholipase A2 homolog W6D49 (Calloselasma rhodostoma (Malayan pit viper)).